The chain runs to 134 residues: ATP synthase epsilon chain (134 aa).

Belongs to the ATPase epsilon chain family. As to quaternary structure, F-type ATPases have 2 components, CF(1) - the catalytic core - and CF(0) - the membrane proton channel. CF(1) has five subunits: alpha(3), beta(3), gamma(1), delta(1), epsilon(1). CF(0) has three main subunits: a, b and c.

It localises to the cellular thylakoid membrane. Produces ATP from ADP in the presence of a proton gradient across the membrane. The chain is ATP synthase epsilon chain from Prochlorococcus marinus (strain MIT 9515).